Here is a 330-residue protein sequence, read N- to C-terminus: MASSTPKTLMDFFQPAKRLKASPSSSSFPAVSVAGGSRDLGSVANSPPRVTVTTSVADDSSGLTPEQIARAEFNKFVAKSKRNLAVCSERVTKAKSEGNCYVPLSELLVEESWLKALPGEFHKPYAKSLSDFLEREIITDSKSPLIYPPQHLIFNALNTTPFDRVKTVIIGQDPYHGPGQAMGLSFSVPEGEKLPSSLLNIFKELHKDVGCSIPRHGNLQKWAVQGVLLLNAVLTVRSKQPNSHAKKGWEQFTDAVIQSISQQKEGVVFLLWGRYAQEKSKLIDATKHHILTAAHPSGLSANRGFFDCRHFSRANQLLEEMGIPPIDWQL.

The transit peptide at 1 to 49 (MASSTPKTLMDFFQPAKRLKASPSSSSFPAVSVAGGSRDLGSVANSPPR) directs the protein to the mitochondrion. D173 serves as the catalytic Proton acceptor.

The protein belongs to the uracil-DNA glycosylase (UDG) superfamily. UNG family.

The protein resides in the mitochondrion. The enzyme catalyses Hydrolyzes single-stranded DNA or mismatched double-stranded DNA and polynucleotides, releasing free uracil.. With respect to regulation, inhidited by the small peptide uracil-DNA-glycosylase inhibitor (Ugi). Functionally, excises uracil residues from the DNA which can arise as a result of misincorporation of dUMP residues by DNA polymerase or due to deamination of cytosine. More active on U:G, U:T and U:C mispairs than on U:A pairs. Highly specific for uracil and no activity with 5-substituted uracil or cytosine derivatives. Required for initiation of base excision repair (BER) of uracil. The protein is Uracil-DNA glycosylase, mitochondrial of Arabidopsis thaliana (Mouse-ear cress).